The primary structure comprises 335 residues: Glyceraldehyde-3-phosphate dehydrogenase (335 aa).

Residues 15 to 16 (RI) and aspartate 37 each bind NAD(+). D-glyceraldehyde 3-phosphate contacts are provided by residues 155 to 157 (SCT), threonine 186, arginine 201, 214 to 215 (TG), and arginine 237. Cysteine 156 serves as the catalytic Nucleophile. Positions 301 and 318 each coordinate NAD(+).

Belongs to the glyceraldehyde-3-phosphate dehydrogenase family. As to quaternary structure, homotetramer.

It is found in the cytoplasm. The catalysed reaction is D-glyceraldehyde 3-phosphate + phosphate + NADP(+) = (2R)-3-phospho-glyceroyl phosphate + NADPH + H(+). The enzyme catalyses D-glyceraldehyde 3-phosphate + phosphate + NAD(+) = (2R)-3-phospho-glyceroyl phosphate + NADH + H(+). The protein operates within carbohydrate degradation; glycolysis; pyruvate from D-glyceraldehyde 3-phosphate: step 1/5. This chain is Glyceraldehyde-3-phosphate dehydrogenase (gap), found in Haloarcula vallismortis (Halobacterium vallismortis).